A 254-amino-acid chain; its full sequence is MTVRVRVIPCLDVAGGRVVKGVNFVDLADAGDPVEQARVYDAAGADELCFLDITASHEGRGTILDVVARTAAVCFMPLTVGGGVRSADDARALLLAGADKVAVNSAAVARPELCAEMAERFGAQCVVGAVDARAVGPGKWEIYTHGGRKPTGIDAVEHAKRLASLGAGEILLTSMDRDGTRDGYDLALTRAISDAVPVPVIASGGVGNLGHLVEGVTRGGASAVLAASIFHFGQHSVAEAHAALRAAGLPVRNG.

Residues Asp-12 and Asp-131 contribute to the active site.

This sequence belongs to the HisA/HisF family. As to quaternary structure, heterodimer of HisH and HisF.

The protein resides in the cytoplasm. It carries out the reaction 5-[(5-phospho-1-deoxy-D-ribulos-1-ylimino)methylamino]-1-(5-phospho-beta-D-ribosyl)imidazole-4-carboxamide + L-glutamine = D-erythro-1-(imidazol-4-yl)glycerol 3-phosphate + 5-amino-1-(5-phospho-beta-D-ribosyl)imidazole-4-carboxamide + L-glutamate + H(+). It functions in the pathway amino-acid biosynthesis; L-histidine biosynthesis; L-histidine from 5-phospho-alpha-D-ribose 1-diphosphate: step 5/9. Functionally, IGPS catalyzes the conversion of PRFAR and glutamine to IGP, AICAR and glutamate. The HisF subunit catalyzes the cyclization activity that produces IGP and AICAR from PRFAR using the ammonia provided by the HisH subunit. This Rhizorhabdus wittichii (strain DSM 6014 / CCUG 31198 / JCM 15750 / NBRC 105917 / EY 4224 / RW1) (Sphingomonas wittichii) protein is Imidazole glycerol phosphate synthase subunit HisF.